Here is a 138-residue protein sequence, read N- to C-terminus: NADH-quinone oxidoreductase subunit A (138 aa).

Transmembrane regions (helical) follow at residues 8-28, 63-83, and 93-113; these read FGAV…GYLT, FYVV…LFPW, and FALI…AYAW.

It belongs to the complex I subunit 3 family. NDH-1 is composed of 14 different subunits. Subunits NuoA, H, J, K, L, M, N constitute the membrane sector of the complex.

It is found in the cell inner membrane. It carries out the reaction a quinone + NADH + 5 H(+)(in) = a quinol + NAD(+) + 4 H(+)(out). Its function is as follows. NDH-1 shuttles electrons from NADH, via FMN and iron-sulfur (Fe-S) centers, to quinones in the respiratory chain. The immediate electron acceptor for the enzyme in this species is believed to be a menaquinone. Couples the redox reaction to proton translocation (for every two electrons transferred, four hydrogen ions are translocated across the cytoplasmic membrane), and thus conserves the redox energy in a proton gradient. The protein is NADH-quinone oxidoreductase subunit A of Prosthecochloris aestuarii (strain DSM 271 / SK 413).